A 102-amino-acid chain; its full sequence is Small ribosomal subunit protein uS10 (102 aa).

This sequence belongs to the universal ribosomal protein uS10 family. Part of the 30S ribosomal subunit.

Functionally, involved in the binding of tRNA to the ribosomes. This is Small ribosomal subunit protein uS10 from Desulfitobacterium hafniense (strain DSM 10664 / DCB-2).